A 384-amino-acid polypeptide reads, in one-letter code: Alpha-2B adrenergic receptor (384 aa).

A helical transmembrane segment spans residues 1–25 (AIAAVTTFLILFTVFGNALVILAVL). The Cytoplasmic segment spans residues 26 to 36 (TSRSLRAPQNL). Residues 37–62 (FLVSLAAADILVATLIXPFSLANELL) form a helical membrane-spanning segment. Topologically, residues 63 to 72 (GYWYFWHTWC) are extracellular. Cysteines 72 and 151 form a disulfide. Residues 73 to 95 (EVYLALXVLXCTSSIVHLCAISL) traverse the membrane as a helical segment. Over 96-117 (DRYWAVSRALEYNSKRTPRRIX) the chain is Cytoplasmic. Residues 118–140 (GIILTVWLIAAAISLPPLIYKGD) traverse the membrane as a helical segment. The Extracellular portion of the chain corresponds to 141–156 (QGPQPHGRPQCRLNQE). Residues 157–180 (AWYILSSSIGSFFAPCLIMILVYL) form a helical membrane-spanning segment. Residues 181-348 (RIYLIAKRRN…LTREKRFTFV (168 aa)) lie on the Cytoplasmic side of the membrane. A disordered region spans residues 193–306 (GPRAQGASKG…SXGSPQLQQP (114 aa)). The span at 288–306 (PEALPASPASXGSPQLQQP) shows a compositional bias: low complexity. Residues 349-372 (LAVVIGVXVLCWFPFFXSYSLGAI) traverse the membrane as a helical segment. Residues 373–381 (CPQHCTVXH) are Extracellular-facing. The helical transmembrane segment at 382 to 384 (GLF) threads the bilayer.

This sequence belongs to the G-protein coupled receptor 1 family. Adrenergic receptor subfamily. ADRA2B sub-subfamily. In terms of assembly, interacts with RAB26. Interacts with PPP1R9B. Interacts with GGA1, GGA2 and GGA3.

The protein localises to the cell membrane. In terms of biological role, alpha-2 adrenergic receptors mediate the catecholamine-induced inhibition of adenylate cyclase through the action of G proteins. This is Alpha-2B adrenergic receptor (ADRA2B) from Echinops telfairi (Lesser hedgehog tenrec).